The following is a 633-amino-acid chain: DNA-directed RNA polymerase subunit beta' (633 aa).

Zn(2+)-binding residues include Cys72, Cys74, Cys87, and Cys90. Mg(2+) contacts are provided by Asp468, Asp470, and Asp472.

This sequence belongs to the RNA polymerase beta' chain family. RpoC1 subfamily. In terms of assembly, in plastids the minimal PEP RNA polymerase catalytic core is composed of four subunits: alpha, beta, beta', and beta''. When a (nuclear-encoded) sigma factor is associated with the core the holoenzyme is formed, which can initiate transcription. The cofactor is Mg(2+). Zn(2+) is required as a cofactor.

It localises to the plastid. The protein resides in the chloroplast. The catalysed reaction is RNA(n) + a ribonucleoside 5'-triphosphate = RNA(n+1) + diphosphate. In terms of biological role, DNA-dependent RNA polymerase catalyzes the transcription of DNA into RNA using the four ribonucleoside triphosphates as substrates. This is DNA-directed RNA polymerase subunit beta' from Cyanidium caldarium (Red alga).